The primary structure comprises 470 residues: FLYWCH transcription factor 2 (470 aa).

The disordered stretch occupies residues 102–148 (SQLISEDTRPSASSSPSSTATAVSNSGQSNATSTSSSSTEPEYKPRN). Residues 111-140 (PSASSSPSSTATAVSNSGQSNATSTSSSST) are compositionally biased toward low complexity. The segment at 145 to 204 (KPRNVREKVYADGYIMSFDKKSCCGTKEFWRCERKNDCNARMHSDINTREIVRKLHPHNH) adopts an FLYWCH-type zinc-finger fold.

Probable transcription factor. May bind to the promoters of target genes, including micro-RNA genes, in order to repress expression, and acting redundantly with flh-1 and flh-3. The protein is FLYWCH transcription factor 2 of Caenorhabditis elegans.